We begin with the raw amino-acid sequence, 470 residues long: Nuclear receptor subfamily 0 group B member 1 (470 aa).

3 consecutive repeat copies span residues 1-67 (MAGE…YRCC), 68-133 (FCGK…YRCC), and 134-200 (FCGE…YRCC). Positions 1-253 (MAGEDHQWQG…RPVALKNPQV (253 aa)) are 4 X 67 AA tandem repeats. 3 consecutive short sequence motifs (LXXLL motif) follow at residues 13-17 (LYNML), 80-84 (LYSML), and 146-150 (LYSLL). A 4; truncated repeat occupies 201–253 (FCGEDQPQQGSTLYSMPTSTNQTPAAPEERPGAPWWDTSCGALRPVALKNPQV). In terms of domain architecture, NR LBD spans 205–469 (DQPQQGSTLY…DMMLEMLCTK (265 aa)). An AF-2 motif motif is present at residues 461–466 (MMLEML).

This sequence belongs to the nuclear hormone receptor family. NR0 subfamily. Homodimer. Interacts with NR5A1, NR5A2, NR0B2 and with COPS2. Interacts with ESRRB; represses ESRRB activity at the GATA6 promoter.

It is found in the nucleus. The protein resides in the cytoplasm. In terms of biological role, nuclear receptor that lacks a DNA-binding domain and acts as a corepressor that inhibits the transcriptional activity of other nuclear receptors through heterodimeric interactions. Component of a cascade required for the development of the hypothalamic-pituitary-adrenal-gonadal axis. May also have a role in the development of the embryo and in the maintenance of embryonic stem cell pluripotency. In Callithrix jacchus (White-tufted-ear marmoset), this protein is Nuclear receptor subfamily 0 group B member 1 (NR0B1).